Here is a 340-residue protein sequence, read N- to C-terminus: 4-dimethylallyltryptophan N-methyltransferase easF (340 aa).

It belongs to the methyltransferase superfamily. Homodimer.

The catalysed reaction is 4-(3-methylbut-2-enyl)-L-tryptophan + S-adenosyl-L-methionine = 4-(3-methylbut-2-enyl)-L-abrine + S-adenosyl-L-homocysteine + H(+). It participates in alkaloid biosynthesis; ergot alkaloid biosynthesis. In terms of biological role, 4-dimethylallyltryptophan N-methyltransferase; part of the gene cluster that mediates the biosynthesis of fungal ergot alkaloid. DmaW catalyzes the first step of ergot alkaloid biosynthesis by condensing dimethylallyl diphosphate (DMAP) and tryptophan to form 4-dimethylallyl-L-tryptophan. The second step is catalyzed by the methyltransferase easF that methylates 4-dimethylallyl-L-tryptophan in the presence of S-adenosyl-L-methionine, resulting in the formation of 4-dimethylallyl-L-abrine. The catalase easC and the FAD-dependent oxidoreductase easE then transform 4-dimethylallyl-L-abrine to chanoclavine-I which is further oxidized by easD in the presence of NAD(+), resulting in the formation of chanoclavine-I aldehyde. Chanoclavine-I aldehyde is the precursor of ergoamides and ergopeptines in Clavicipitaceae, and clavine-type alcaloids such as fumiclavine in Trichocomaceae. However, the metabolites downstream of chanoclavine-I aldehyde in Arthrodermataceae have not been identified yet. The sequence is that of 4-dimethylallyltryptophan N-methyltransferase easF from Arthroderma benhamiae (strain ATCC MYA-4681 / CBS 112371) (Trichophyton mentagrophytes).